Here is a 55-residue protein sequence, read N- to C-terminus: UPF0391 membrane protein Neut_2351/Neut_2360 (55 aa).

Helical transmembrane passes span 4 to 24 (LAVVFLIIAVIAALLGVTGVA) and 28 to 48 (AEMAWILFVIGIVLAIVFWVL).

This sequence belongs to the UPF0391 family.

Its subcellular location is the cell membrane. The polypeptide is UPF0391 membrane protein Neut_2351/Neut_2360 (Nitrosomonas eutropha (strain DSM 101675 / C91 / Nm57)).